A 101-amino-acid chain; its full sequence is Small ribosomal subunit protein cS23 (101 aa).

It belongs to the chloroplast-specific ribosomal protein cS23 family. Part of the 30S ribosomal subunit.

It is found in the plastid. The protein localises to the chloroplast. Probably a ribosomal protein or a ribosome-associated protein. The polypeptide is Small ribosomal subunit protein cS23 (ycf65) (Euglena myxocylindracea).